Reading from the N-terminus, the 469-residue chain is Dihydrolipoyl dehydrogenase (469 aa).

FAD is bound by residues glutamate 34–cysteine 42, lysine 51, and glycine 114. Cysteine 42 and cysteine 47 form a disulfide bridge. NAD(+)-binding positions include glycine 179 to isoleucine 183, glutamate 202, and serine 269 to phenylalanine 272. FAD-binding residues include aspartate 312 and alanine 320. Histidine 448 serves as the catalytic Proton acceptor.

This sequence belongs to the class-I pyridine nucleotide-disulfide oxidoreductase family. Homodimer. Part of an unusual ODH/PDH supercomplex, consisting of AceE (E1), AceF (E2), and Lpd (E3) together with OdhA (E1+E2). The cofactor is FAD.

The protein resides in the cytoplasm. The catalysed reaction is N(6)-[(R)-dihydrolipoyl]-L-lysyl-[protein] + NAD(+) = N(6)-[(R)-lipoyl]-L-lysyl-[protein] + NADH + H(+). It participates in carbohydrate metabolism; tricarboxylic acid cycle; succinyl-CoA from 2-oxoglutarate (dehydrogenase route): step 1/1. In terms of biological role, lipoamide dehydrogenase is an essential component of the pyruvate dehydrogenase (PDH) and 2-oxoglutarate dehydrogenase (ODH) complexes. Catalyzes the reoxidation of dihydrolipoyl groups which are covalently attached to the lipoate acyltransferase components (E2) of the complexes. Also catalyzes a reversible NADH:NAD(+) transhydrogenation, and is able to transfer electrons from NADH to various redox-active compounds and quinones. May be involved in quinone redox cycling in C.glutamicum. The polypeptide is Dihydrolipoyl dehydrogenase (lpd) (Corynebacterium glutamicum (strain ATCC 13032 / DSM 20300 / JCM 1318 / BCRC 11384 / CCUG 27702 / LMG 3730 / NBRC 12168 / NCIMB 10025 / NRRL B-2784 / 534)).